Reading from the N-terminus, the 85-residue chain is Dual endothelin-1/VEGF signal peptide receptor (85 aa).

The Extracellular portion of the chain corresponds to 1-18 (MTMFKGSNEMKSRWNWGS). The helical transmembrane segment at 19-37 (ITCIICFTCVGSQLSMSSS) threads the bilayer. Topologically, residues 38-85 (KASNFSGPLQLYQRELEIFIVLTDVPNYRLIKENSHLHTTIVDQGRTV) are cytoplasmic.

In terms of processing, N-glycosylated. As to expression, expressed in kidney. Expressed in endothelial cells.

It localises to the cell membrane. Its function is as follows. Dual receptor for both endothelin-1 and the signal sequence of vascular endothelial growth factor A. Does not act as a receptor for angiotensin-2. Does not bind the VEGFA mature protein. May play a role in angiogenesis with a significant role in cardiovascular and neural development. This chain is Dual endothelin-1/VEGF signal peptide receptor, found in Homo sapiens (Human).